An 80-amino-acid polypeptide reads, in one-letter code: Exodeoxyribonuclease 7 small subunit (80 aa).

Belongs to the XseB family. As to quaternary structure, heterooligomer composed of large and small subunits.

It localises to the cytoplasm. It catalyses the reaction Exonucleolytic cleavage in either 5'- to 3'- or 3'- to 5'-direction to yield nucleoside 5'-phosphates.. Bidirectionally degrades single-stranded DNA into large acid-insoluble oligonucleotides, which are then degraded further into small acid-soluble oligonucleotides. This Shigella sonnei (strain Ss046) protein is Exodeoxyribonuclease 7 small subunit.